A 157-amino-acid chain; its full sequence is Small ribosomal subunit protein uS7 (157 aa).

Belongs to the universal ribosomal protein uS7 family. Part of the 30S ribosomal subunit. Contacts proteins S9 and S11.

Functionally, one of the primary rRNA binding proteins, it binds directly to 16S rRNA where it nucleates assembly of the head domain of the 30S subunit. Is located at the subunit interface close to the decoding center, probably blocks exit of the E-site tRNA. The sequence is that of Small ribosomal subunit protein uS7 from Desulfotalea psychrophila (strain LSv54 / DSM 12343).